Reading from the N-terminus, the 143-residue chain is Large ribosomal subunit protein uL11 (143 aa).

Belongs to the universal ribosomal protein uL11 family. As to quaternary structure, part of the ribosomal stalk of the 50S ribosomal subunit. Interacts with L10 and the large rRNA to form the base of the stalk. L10 forms an elongated spine to which L12 dimers bind in a sequential fashion forming a multimeric L10(L12)X complex. In terms of processing, one or more lysine residues are methylated.

Functionally, forms part of the ribosomal stalk which helps the ribosome interact with GTP-bound translation factors. The sequence is that of Large ribosomal subunit protein uL11 from Psychrobacter cryohalolentis (strain ATCC BAA-1226 / DSM 17306 / VKM B-2378 / K5).